Reading from the N-terminus, the 129-residue chain is Glycine cleavage system H protein (129 aa).

Residues 24-106 (TYTVGITEHA…YAGGWIFKIK (83 aa)) enclose the Lipoyl-binding domain. Lysine 65 carries the post-translational modification N6-lipoyllysine.

It belongs to the GcvH family. In terms of assembly, the glycine cleavage system is composed of four proteins: P, T, L and H. (R)-lipoate serves as cofactor.

Its function is as follows. The glycine cleavage system catalyzes the degradation of glycine. The H protein shuttles the methylamine group of glycine from the P protein to the T protein. The chain is Glycine cleavage system H protein from Escherichia coli O139:H28 (strain E24377A / ETEC).